The sequence spans 21 residues: Trypsin (21 aa).

It belongs to the peptidase S1 family.

It localises to the secreted. The protein resides in the extracellular space. It carries out the reaction Preferential cleavage: Arg-|-Xaa, Lys-|-Xaa.. The polypeptide is Trypsin (Apis mellifera scutellata (Africanized honey bee)).